We begin with the raw amino-acid sequence, 242 residues long: Ribosomal RNA small subunit methyltransferase G (242 aa).

S-adenosyl-L-methionine contacts are provided by residues glycine 78, leucine 83, 130-131 (AE), and arginine 151.

This sequence belongs to the methyltransferase superfamily. RNA methyltransferase RsmG family.

The protein localises to the cytoplasm. Specifically methylates the N7 position of guanine in position 518 of 16S rRNA. The protein is Ribosomal RNA small subunit methyltransferase G of Salinispora arenicola (strain CNS-205).